A 302-amino-acid chain; its full sequence is Plant UBX domain-containing protein 3 (302 aa).

2 disordered regions span residues 1–64 and 79–98; these read MSSK…PKHD and VEGP…TGRL. Residues 113 to 177 form the SEP domain; sequence PVIHNIIFWS…NLMRRDEKCP (65 aa). Residues 224–301 enclose the UBX domain; it reads ETLPSTSIQL…GLASSVVIQK (78 aa).

Interacts with CDC48A.

This Arabidopsis thaliana (Mouse-ear cress) protein is Plant UBX domain-containing protein 3.